Reading from the N-terminus, the 234-residue chain is MVYARPIFGLCGGILWLSPERRSFTILFYVDNSFICSGRLCRKGGVNEHKRQLHNVFTLIPFVLLYLFYDVTTGAAMLSGVSSHILLDFMTPTGCPFFYPIYKGRYRVDWRHKGSGPREKRALTTIGILAAILLLVIYAPSPFAPTSAISQWKGSGSGASNNRTDINVNFNFRGNGDTWIHPYPNGSIFIDYVSDGDSRVYRYRGISRGGQGKHLKLDSNTTENKTTKQNETGG.

The tract at residues 212 to 234 (GKHLKLDSNTTENKTTKQNETGG) is disordered. The span at 220 to 234 (NTTENKTTKQNETGG) shows a compositional bias: low complexity.

This is an uncharacterized protein from Methanothermobacter thermautotrophicus (Methanobacterium thermoformicicum).